Consider the following 488-residue polypeptide: Dipeptidase 3 (488 aa).

The N-terminal stretch at 1–35 (MQPTGPEGPRALSLRPLGHRLSLLGVLLIIPSLWV) is a signal peptide. Residues 41–60 (TPSLSSAPTSPGASSAMTTP) show a composition bias toward low complexity. A disordered region spans residues 41-74 (TPSLSSAPTSPGASSAMTTPGIPNDTTTSGVTSD). Disulfide bonds link Cys143/Cys222 and Cys294/Cys326. Asn331 is a glycosylation site (N-linked (GlcNAc...) asparagine). Residue Ser459 is the site of GPI-anchor amidated serine attachment. The propeptide at 460–487 (KAPPCPLLGLVAAVTSPAFTLWLCCSGH) is removed in mature form.

Belongs to the metallo-dependent hydrolases superfamily. Peptidase M19 family. Homodimer; disulfide-linked. Interacts with TEX101; co-localized on the cell surface of spermatocytes, spermatids, and testicular spermatozoa, co-localized only in cytoplasmic droplets of caput and corpus epididymal sperm.

It localises to the membrane. Functionally, lacks dipeptidase activity and is unable to hydrolyze cystinyl-bis-glycine, leukotriene D4 and the beta-lactam antibiotic imipenem. The absence of activity may be due to the inability of serine (instead of aspartate found in DPEP1/2) at position 356 to function as the acid/base catalyst and activate the nucleophilic water/hydroxide. The sequence is that of Dipeptidase 3 (Dpep3) from Rattus norvegicus (Rat).